The following is a 479-amino-acid chain: Flotillin-like protein 3 (479 aa).

The S-palmitoyl cysteine moiety is linked to residue cysteine 36. 2 coiled-coil regions span residues 227-251 (KVKT…AALA) and 306-326 (EYET…KQAE).

Belongs to the band 7/mec-2 family. Flotillin subfamily. In terms of processing, may be palmitoylated.

The protein localises to the cell membrane. It localises to the membrane. The protein resides in the caveola. Its function is as follows. May act as a scaffolding protein within caveolar membranes, functionally participating in formation of caveolae or caveolae-like vesicles. This chain is Flotillin-like protein 3 (FLOT3), found in Arabidopsis thaliana (Mouse-ear cress).